Reading from the N-terminus, the 402-residue chain is UPF0261 protein BP1203 (402 aa).

The protein belongs to the UPF0261 family.

In Bordetella pertussis (strain Tohama I / ATCC BAA-589 / NCTC 13251), this protein is UPF0261 protein BP1203.